The sequence spans 265 residues: Deoxyguanosine kinase, mitochondrial (265 aa).

ATP is bound at residue 32–40 (GNIAVGKST). Substrate contacts are provided by E57, Y88, Q99, and R106. E129 (proton acceptor) is an active-site residue. Substrate contacts are provided by R130 and D135. 190–194 (RLQRR) serves as a coordination point for ATP. Residue E199 participates in substrate binding. 242-244 (EDF) contacts ATP.

Belongs to the DCK/DGK family. Homodimer.

It localises to the mitochondrion. The enzyme catalyses 2'-deoxyguanosine + ATP = dGMP + ADP + H(+). In terms of biological role, phosphorylates deoxyguanosine in the mitochondrial matrix with high efficiency but shows very low activity against other deoxynucleosides. In Xenopus laevis (African clawed frog), this protein is Deoxyguanosine kinase, mitochondrial.